The sequence spans 147 residues: Large ribosomal subunit protein uL11 (147 aa).

It belongs to the universal ribosomal protein uL11 family. Part of the ribosomal stalk of the 50S ribosomal subunit. Interacts with L10 and the large rRNA to form the base of the stalk. L10 forms an elongated spine to which L12 dimers bind in a sequential fashion forming a multimeric L10(L12)X complex. In terms of processing, one or more lysine residues are methylated.

In terms of biological role, forms part of the ribosomal stalk which helps the ribosome interact with GTP-bound translation factors. This Corynebacterium aurimucosum (strain ATCC 700975 / DSM 44827 / CIP 107346 / CN-1) (Corynebacterium nigricans) protein is Large ribosomal subunit protein uL11.